A 281-amino-acid chain; its full sequence is Protein DOG1-like 1 (281 aa).

A DOG1 domain is found at glutamate 9–arginine 265. The disordered stretch occupies residues arginine 262 to glutamate 281.

This chain is Protein DOG1-like 1, found in Arabidopsis thaliana (Mouse-ear cress).